Consider the following 152-residue polypeptide: Ribonuclease pancreatic gamma-type (152 aa).

The first 25 residues, 1–25 (MGLEKSFILFSLLVLVLGCVQPSLV), serve as a signal peptide directing secretion. The segment at 26 to 48 (GESKESPSEKFKRRHMDEEGPYQ) is disordered. Over residues 27–43 (ESKESPSEKFKRRHMDE) the composition is skewed to basic and acidic residues. The substrate site is built by Lys35 and Arg38. His40 serves as the catalytic Proton acceptor. 4 cysteine pairs are disulfide-bonded: Cys54/Cys112, Cys68/Cys123, Cys86/Cys138, and Cys93/Cys100. Substrate contacts are provided by residues 69–73 (KPLNT) and Lys94. His147 (proton donor) is an active-site residue.

Belongs to the pancreatic ribonuclease family. In terms of assembly, monomer.

It localises to the secreted. It catalyses the reaction an [RNA] containing cytidine + H2O = an [RNA]-3'-cytidine-3'-phosphate + a 5'-hydroxy-ribonucleotide-3'-[RNA].. It carries out the reaction an [RNA] containing uridine + H2O = an [RNA]-3'-uridine-3'-phosphate + a 5'-hydroxy-ribonucleotide-3'-[RNA].. In terms of biological role, endonuclease that catalyzes the cleavage of RNA on the 3' side of pyrimidine nucleotides. Acts on single-stranded and double-stranded RNA. This is Ribonuclease pancreatic gamma-type from Rattus fuscipes (Bush rat).